A 305-amino-acid polypeptide reads, in one-letter code: Testis-expressed protein 52 (305 aa).

A disordered region spans residues 284–305; that stretch reads HLSKAQASKSPARKRKRRPGHF. The segment covering 294–305 has biased composition (basic residues); sequence PARKRKRRPGHF.

As to expression, expressed in Testis.

The protein is Testis-expressed protein 52 of Homo sapiens (Human).